Here is a 726-residue protein sequence, read N- to C-terminus: Quinolinate synthase, chloroplastic (726 aa).

The N-terminal 67 residues, 1–67 (MDAANLVMKS…KKPSNNSTFT (67 aa)), are a transit peptide targeting the chloroplast. The active-site Cysteine persulfide intermediate is the C133. Iminosuccinate is bound by residues H283 and S309. C363 is a binding site for [4Fe-4S] cluster. Iminosuccinate contacts are provided by residues 392 to 394 (YIN) and S414. C487 contacts [4Fe-4S] cluster. Residues 513-515 (HFE) and T538 contribute to the iminosuccinate site. [4Fe-4S] cluster is bound at residue C643.

The protein belongs to the quinolinate synthase family. Type 1 subfamily. In terms of assembly, homodimer. [4Fe-4S] cluster is required as a cofactor.

It localises to the plastid. The protein localises to the chloroplast. The enzyme catalyses iminosuccinate + dihydroxyacetone phosphate = quinolinate + phosphate + 2 H2O + H(+). It participates in alkaloid biosynthesis; nicotine biosynthesis. The protein operates within cofactor biosynthesis; NAD(+) biosynthesis; quinolinate from iminoaspartate: step 1/1. Its function is as follows. Involved in the biosynthesis of pyridine alkaloid natural products, leading mainly to the production of anabasine, anatabine, nicotine and nornicotine, effective deterrents against herbivores with antiparasitic and pesticide properties (neurotoxins); nornicotine serves as the precursor in the synthesis of the carcinogen compound N'-nitrosonornicotine (NNN). Catalyzes the condensation of iminoaspartate with dihydroxyacetone phosphate to form quinolinate. The protein is Quinolinate synthase, chloroplastic of Nicotiana tabacum (Common tobacco).